Consider the following 178-residue polypeptide: Transcription factor E (178 aa).

Residues 3 to 86 enclose the HTH TFE/IIEalpha-type domain; that stretch reads AHEALAEIAG…YWRITDEPIQ (84 aa).

Belongs to the TFE family. In terms of assembly, monomer. Interaction with RNA polymerase subunits RpoF and RpoE is necessary for Tfe stimulatory transcription activity. Able to interact with Tbp and RNA polymerase in the absence of DNA promoter. Interacts both with the preinitiation and elongation complexes.

In terms of biological role, transcription factor that plays a role in the activation of archaeal genes transcribed by RNA polymerase. Facilitates transcription initiation by enhancing TATA-box recognition by TATA-box-binding protein (Tbp), and transcription factor B (Tfb) and RNA polymerase recruitment. Not absolutely required for transcription in vitro, but particularly important in cases where Tbp or Tfb function is not optimal. It dynamically alters the nucleic acid-binding properties of RNA polymerases by stabilizing the initiation complex and destabilizing elongation complexes. Seems to translocate with the RNA polymerase following initiation and acts by binding to the non template strand of the transcription bubble in elongation complexes. This chain is Transcription factor E, found in Thermofilum pendens (strain DSM 2475 / Hrk 5).